The following is a 227-amino-acid chain: Orotidine 5'-phosphate decarboxylase (227 aa).

Substrate-binding positions include Asp8, Lys30, 59–68 (DLKLYDIPNT), Thr118, Arg178, Gln187, Gly207, and Arg208. Lys61 serves as the catalytic Proton donor.

The protein belongs to the OMP decarboxylase family. Type 1 subfamily. As to quaternary structure, homodimer.

It catalyses the reaction orotidine 5'-phosphate + H(+) = UMP + CO2. It participates in pyrimidine metabolism; UMP biosynthesis via de novo pathway; UMP from orotate: step 2/2. Catalyzes the decarboxylation of orotidine 5'-monophosphate (OMP) to uridine 5'-monophosphate (UMP). The polypeptide is Orotidine 5'-phosphate decarboxylase (Sulfurimonas denitrificans (strain ATCC 33889 / DSM 1251) (Thiomicrospira denitrificans (strain ATCC 33889 / DSM 1251))).